The following is a 414-amino-acid chain: Phosphopentomutase (414 aa).

The Mn(2+) site is built by D10, D309, H314, D350, H351, and H362.

This sequence belongs to the phosphopentomutase family. Mn(2+) is required as a cofactor.

It localises to the cytoplasm. The enzyme catalyses 2-deoxy-alpha-D-ribose 1-phosphate = 2-deoxy-D-ribose 5-phosphate. It catalyses the reaction alpha-D-ribose 1-phosphate = D-ribose 5-phosphate. Its pathway is carbohydrate degradation; 2-deoxy-D-ribose 1-phosphate degradation; D-glyceraldehyde 3-phosphate and acetaldehyde from 2-deoxy-alpha-D-ribose 1-phosphate: step 1/2. Functionally, isomerase that catalyzes the conversion of deoxy-ribose 1-phosphate (dRib-1-P) and ribose 1-phosphate (Rib-1-P) to deoxy-ribose 5-phosphate (dRib-5-P) and ribose 5-phosphate (Rib-5-P), respectively. The sequence is that of Phosphopentomutase from Hahella chejuensis (strain KCTC 2396).